Consider the following 445-residue polypeptide: von Willebrand factor A domain-containing protein 1 (445 aa).

A signal peptide spans 1–22; sequence MLPWTALGLALSLRLALARSGA. One can recognise a VWFA domain in the interval 34–213; that stretch reads DLMFLLDSSA…ELRGSILDAM (180 aa). Residues Ser74 and Ser80 each carry the phosphoserine; by FAM20C modification. Tyr83 carries the post-translational modification Phosphotyrosine. Ser93 is modified (phosphoserine; by FAM20C). The Fibronectin type-III 1 domain occupies 214–304; that stretch reads RPQQLHATEI…QILRVRTRPG (91 aa). Asn264 carries an N-linked (GlcNAc...) asparagine glycan. Disordered stretches follow at residues 302–325 and 411–445; these read RPGE…TQLA and RESA…SREP. The span at 311–325 shows a compositional bias: low complexity; the sequence is SGPESGAGPAPTQLA. The region spanning 334–427 is the Fibronectin type-III 2 domain; it reads GPERIVISHA…KACTPDGPRP (94 aa).

Homodimer or homomultimer; disulfide-linked. Interacts with HSPG2. N-glycosylated.

It is found in the secreted. The protein resides in the extracellular space. It localises to the extracellular matrix. The protein localises to the basement membrane. In terms of biological role, promotes matrix assembly. Involved in the organization of skeletal muscles and in the formation of neuromuscular junctions. The protein is von Willebrand factor A domain-containing protein 1 of Homo sapiens (Human).